A 365-amino-acid chain; its full sequence is DNA polymerase IV (365 aa).

The UmuC domain occupies 7–188 (IIHIDMDAFY…LPVNKFFGVG (182 aa)). Mg(2+) is bound by residues aspartate 11 and aspartate 106. The active site involves glutamate 107.

This sequence belongs to the DNA polymerase type-Y family. In terms of assembly, monomer. It depends on Mg(2+) as a cofactor.

Its subcellular location is the cytoplasm. It carries out the reaction DNA(n) + a 2'-deoxyribonucleoside 5'-triphosphate = DNA(n+1) + diphosphate. Poorly processive, error-prone DNA polymerase involved in untargeted mutagenesis. Copies undamaged DNA at stalled replication forks, which arise in vivo from mismatched or misaligned primer ends. These misaligned primers can be extended by PolIV. Exhibits no 3'-5' exonuclease (proofreading) activity. May be involved in translesional synthesis, in conjunction with the beta clamp from PolIII. This Clostridioides difficile (strain 630) (Peptoclostridium difficile) protein is DNA polymerase IV.